Reading from the N-terminus, the 144-residue chain is D-aminoacyl-tRNA deacylase (144 aa).

The short motif at 136–137 (GP) is the Gly-cisPro motif, important for rejection of L-amino acids element.

Belongs to the DTD family. Homodimer.

It is found in the cytoplasm. It carries out the reaction glycyl-tRNA(Ala) + H2O = tRNA(Ala) + glycine + H(+). The enzyme catalyses a D-aminoacyl-tRNA + H2O = a tRNA + a D-alpha-amino acid + H(+). Its function is as follows. An aminoacyl-tRNA editing enzyme that deacylates mischarged D-aminoacyl-tRNAs. Also deacylates mischarged glycyl-tRNA(Ala), protecting cells against glycine mischarging by AlaRS. Acts via tRNA-based rather than protein-based catalysis; rejects L-amino acids rather than detecting D-amino acids in the active site. By recycling D-aminoacyl-tRNA to D-amino acids and free tRNA molecules, this enzyme counteracts the toxicity associated with the formation of D-aminoacyl-tRNA entities in vivo and helps enforce protein L-homochirality. The sequence is that of D-aminoacyl-tRNA deacylase from Vibrio parahaemolyticus serotype O3:K6 (strain RIMD 2210633).